A 449-amino-acid polypeptide reads, in one-letter code: Putative tartrate transporter (449 aa).

A run of 11 helical transmembrane segments spans residues 34 to 54 (IVPF…NIGF), 64 to 84 (GFSS…YFLF), 99 to 119 (IWIA…AFVQ), 130 to 150 (LLGV…SFWF), 156 to 176 (AAVT…GSPI), 194 to 214 (WMFL…LFFL), 259 to 279 (VIAL…LGIW), 292 to 312 (IEVG…MVLW), 336 to 356 (GLAF…LTIV), 367 to 387 (LWSM…IATI), and 414 to 434 (GGLY…LILA).

It belongs to the major facilitator superfamily. Phthalate permease family.

It localises to the cell membrane. Its function is as follows. Component of the tartrate utilization system and may allow entry of tartrate and tartrate dehydrogenase. This chain is Putative tartrate transporter (ttuB), found in Agrobacterium vitis (Rhizobium vitis).